The following is a 141-amino-acid chain: Nucleoside diphosphate kinase (141 aa).

6 residues coordinate ATP: Lys-10, Phe-58, Arg-86, Thr-92, Arg-103, and Asn-113. The active-site Pros-phosphohistidine intermediate is the His-116.

The protein belongs to the NDK family. Homotetramer. It depends on Mg(2+) as a cofactor.

It localises to the cytoplasm. It catalyses the reaction a 2'-deoxyribonucleoside 5'-diphosphate + ATP = a 2'-deoxyribonucleoside 5'-triphosphate + ADP. The catalysed reaction is a ribonucleoside 5'-diphosphate + ATP = a ribonucleoside 5'-triphosphate + ADP. Functionally, major role in the synthesis of nucleoside triphosphates other than ATP. The ATP gamma phosphate is transferred to the NDP beta phosphate via a ping-pong mechanism, using a phosphorylated active-site intermediate. The protein is Nucleoside diphosphate kinase of Ehrlichia canis (strain Jake).